A 164-amino-acid chain; its full sequence is SsrA-binding protein (164 aa).

A disordered region spans residues 141-164 (KLHDKRQDEKQKSIKKEINSALKR). Residues 145–158 (KRQDEKQKSIKKEI) show a composition bias toward basic and acidic residues.

Belongs to the SmpB family.

Its subcellular location is the cytoplasm. Its function is as follows. Required for rescue of stalled ribosomes mediated by trans-translation. Binds to transfer-messenger RNA (tmRNA), required for stable association of tmRNA with ribosomes. tmRNA and SmpB together mimic tRNA shape, replacing the anticodon stem-loop with SmpB. tmRNA is encoded by the ssrA gene; the 2 termini fold to resemble tRNA(Ala) and it encodes a 'tag peptide', a short internal open reading frame. During trans-translation Ala-aminoacylated tmRNA acts like a tRNA, entering the A-site of stalled ribosomes, displacing the stalled mRNA. The ribosome then switches to translate the ORF on the tmRNA; the nascent peptide is terminated with the 'tag peptide' encoded by the tmRNA and targeted for degradation. The ribosome is freed to recommence translation, which seems to be the essential function of trans-translation. This is SsrA-binding protein from Prochlorococcus marinus (strain MIT 9301).